The chain runs to 224 residues: Endonuclease NucS (224 aa).

This sequence belongs to the NucS endonuclease family.

Its subcellular location is the cytoplasm. In terms of biological role, cleaves both 3' and 5' ssDNA extremities of branched DNA structures. This is Endonuclease NucS from Rhodococcus erythropolis (strain PR4 / NBRC 100887).